The chain runs to 272 residues: Shikimate dehydrogenase (NADP(+)) (272 aa).

Residues 14 to 16 and threonine 61 each bind shikimate; that span reads SKS. The active-site Proton acceptor is the lysine 65. Glutamate 77 serves as a coordination point for NADP(+). Residues asparagine 86 and aspartate 102 each contribute to the shikimate site. NADP(+) is bound by residues 126–130, 149–154, and methionine 213; these read GAGGA and NRTVSR. Position 215 (tyrosine 215) interacts with shikimate. Glycine 237 lines the NADP(+) pocket.

Belongs to the shikimate dehydrogenase family. In terms of assembly, homodimer.

It catalyses the reaction shikimate + NADP(+) = 3-dehydroshikimate + NADPH + H(+). It participates in metabolic intermediate biosynthesis; chorismate biosynthesis; chorismate from D-erythrose 4-phosphate and phosphoenolpyruvate: step 4/7. Functionally, involved in the biosynthesis of the chorismate, which leads to the biosynthesis of aromatic amino acids. Catalyzes the reversible NADPH linked reduction of 3-dehydroshikimate (DHSA) to yield shikimate (SA). This is Shikimate dehydrogenase (NADP(+)) from Escherichia coli O157:H7.